Reading from the N-terminus, the 36-residue chain is Photosystem II reaction center protein M (36 aa).

The helical transmembrane segment at 5-25 (ILGVIATALFIIIPTSFLLIL) threads the bilayer.

It belongs to the PsbM family. In terms of assembly, PSII is composed of 1 copy each of membrane proteins PsbA, PsbB, PsbC, PsbD, PsbE, PsbF, PsbH, PsbI, PsbJ, PsbK, PsbL, PsbM, PsbT, PsbX, PsbY, PsbZ, Psb30/Ycf12, at least 3 peripheral proteins of the oxygen-evolving complex and a large number of cofactors. It forms dimeric complexes.

The protein localises to the plastid. Its subcellular location is the chloroplast thylakoid membrane. Its function is as follows. One of the components of the core complex of photosystem II (PSII). PSII is a light-driven water:plastoquinone oxidoreductase that uses light energy to abstract electrons from H(2)O, generating O(2) and a proton gradient subsequently used for ATP formation. It consists of a core antenna complex that captures photons, and an electron transfer chain that converts photonic excitation into a charge separation. This subunit is found at the monomer-monomer interface. This chain is Photosystem II reaction center protein M, found in Chlorella vulgaris (Green alga).